Consider the following 210-residue polypeptide: C4-dicarboxylate TRAP transporter small permease protein DctQ (210 aa).

4 consecutive transmembrane segments (helical) span residues 13-33 (EGLIAFLLAAMTLVTFVYVVL), 77-97 (ALFAWLIFLGIAYGVRTAGHL), 113-133 (VLGVIACLACLGYAGLLCVAS), and 160-180 (IGLIVPVGFALVFIRFAEILV).

It belongs to the TRAP transporter small permease family. In terms of assembly, the complex comprises the extracytoplasmic solute receptor protein DctP, and the two transmembrane proteins DctQ and DctM.

The protein localises to the cell inner membrane. Functionally, part of the tripartite ATP-independent periplasmic (TRAP) transport system DctPQM involved in C4-dicarboxylates uptake. The protein is C4-dicarboxylate TRAP transporter small permease protein DctQ of Pseudomonas aeruginosa (strain ATCC 15692 / DSM 22644 / CIP 104116 / JCM 14847 / LMG 12228 / 1C / PRS 101 / PAO1).